A 247-amino-acid polypeptide reads, in one-letter code: Fibroblast growth factor 14 (247 aa).

Disordered stretches follow at residues 1 to 38 and 214 to 247; these read MAAA…KNRG and VGET…SKTT. The span at 15–25 shows a compositional bias: basic and acidic residues; the sequence is QAREQHWDRPS.

It belongs to the heparin-binding growth factors family. As to quaternary structure, interacts with SCN8A. Nervous system.

It localises to the nucleus. In terms of biological role, probably involved in nervous system development and function. The chain is Fibroblast growth factor 14 (FGF14) from Homo sapiens (Human).